Here is a 577-residue protein sequence, read N- to C-terminus: Cell pattern formation-associated protein stuA (577 aa).

A disordered region spans residues 1-41 (MNQPQPYMDQHAPAPPPASNMTQYSNYGAPQPLQPATHGYG). Polar residues predominate over residues 19–28 (SNMTQYSNYG). An HTH APSES-type domain is found at 111-217 (RVTATLWEDE…HNIGALLYHP (107 aa)). A DNA-binding region (H-T-H motif) is located at residues 145–166 (GTKLLNVAGMTRGRRDGILKSE). Disordered stretches follow at residues 228-487 (ATMA…QLPS) and 518-577 (QYPA…AVRR). Polar residues-rich tracts occupy residues 238-251 (SQEY…TQAP) and 319-333 (AVNS…SQGM). Over residues 334-350 (PQYQTSQPPYTQSYSTP) the composition is skewed to low complexity. The segment covering 351–364 (GSYSQPQYTHQQPG) has biased composition (polar residues). Residues 390-399 (AENDHPDHKV) show a composition bias toward basic and acidic residues. Residues 465-479 (TPRTTNPYTGYNNTP) show a composition bias toward low complexity. Residues 526–552 (KRGREDDDQVDPYGRPSSALGEHKRQR) form a nuclear localization domain region.

Belongs to the EFG1/PHD1/stuA family.

It localises to the nucleus. Transcription factor that regulates asexual reproduction. Binds the StuA-response elements (StRE) with the consensus sequence 5'-(A/T)CGCG(T/A)N(A/C)-3' at the promoters of target genes. The protein is Cell pattern formation-associated protein stuA of Dothistroma septosporum (strain NZE10 / CBS 128990) (Red band needle blight fungus).